The sequence spans 228 residues: FCS-Like Zinc finger 12 (228 aa).

The FLZ-type zinc finger occupies D162–E205.

It belongs to the FLZ family. In terms of assembly, interacts with KIN10 and KIN11 via its FLZ-type zinc finger domain. Interacts with KINB1 and KINB2 via its N-terminal part. Forms homodimer and heterodimer with FLZ2 and FLZ10 in vitro.

Functionally, may act as an adapter to facilitate the interaction of SnRK1 complex with effector proteins, conferring tissue- and stimulus-type specific differences in the SnRK1 regulation pathway. The chain is FCS-Like Zinc finger 12 from Arabidopsis thaliana (Mouse-ear cress).